The primary structure comprises 1059 residues: Ubiquitin carboxyl-terminal hydrolase 36 (1059 aa).

Disordered regions lie at residues 24-49 (VGNG…DSEM) and 94-148 (SNNN…KPKR). The span at 94-123 (SNNNNSSSCNGSNFGNSKVVGANGHDNGNN) shows a compositional bias: low complexity. The span at 130-139 (QSESTQSGPS) shows a compositional bias: polar residues. In terms of domain architecture, USP spans 171 to 479 (TGMINVGNTC…NAYIMFYELD (309 aa)). The active-site Nucleophile is the Cys-180. His-438 functions as the Proton acceptor in the catalytic mechanism. A disordered region spans residues 505-673 (TVSSSSPTHT…KTPLKSSVKT (169 aa)). 2 positions are modified to phosphoserine: Ser-508 and Ser-510. Residues 528 to 539 (GYSNGHATGSSN) are compositionally biased toward polar residues. 3 stretches are compositionally biased toward low complexity: residues 540–560 (AQKT…NGLQ), 592–611 (NGNK…KSVN), and 633–647 (ATAT…RPTA). The span at 655 to 664 (MTEDSSDKPK) shows a compositional bias: basic and acidic residues. A phosphothreonine mark is found at Thr-673 and Thr-682. 3 disordered regions span residues 687 to 893 (LVPY…EAST), 926 to 998 (KELV…RYHN), and 1012 to 1059 (KYNR…QSSS). 2 positions are modified to phosphoserine: Ser-692 and Ser-694. 2 stretches are compositionally biased toward low complexity: residues 729 to 739 (TKTNGGSLTNG) and 752 to 765 (SSSS…ASAA). The residue at position 766 (Ser-766) is a Phosphoserine. Positions 766 to 776 (SDDEDADEEEE) are enriched in acidic residues. A compositionally biased stretch (polar residues) spans 779 to 795 (KLTNGWQPQKQSQSLTQ). The segment covering 799 to 808 (PPSPKTPPSP) has biased composition (pro residues). Ser-801 bears the Phosphoserine mark. Thr-804 is modified (phosphothreonine). Ser-807 bears the Phosphoserine mark. Positions 825 to 839 (DNEDEDDDDDEDEEE) are enriched in acidic residues. Composition is skewed to polar residues over residues 842–862 (QVVS…STTP) and 876–893 (KSQQ…EAST). Phosphothreonine is present on residues Thr-846 and Thr-861. Positions 926–940 (KELVAEAREQRQHDH) are enriched in basic and acidic residues. Positions 1048-1059 (QQQQQQSQQSSS) are enriched in low complexity.

It belongs to the peptidase C19 family. In terms of assembly, interacts with atms/PAF1, but not with CycT.

It is found in the nucleus. Its subcellular location is the nucleolus. It carries out the reaction Thiol-dependent hydrolysis of ester, thioester, amide, peptide and isopeptide bonds formed by the C-terminal Gly of ubiquitin (a 76-residue protein attached to proteins as an intracellular targeting signal).. Functionally, required for maintaining multiple types of adult stem cells, including male and female germline, epithelial follicle cell and intestinal stem cells. May function as a transcriptional repressor by continually deubiquiting histone H2B at the promoters of genes critical for cellular differentiation, thereby preventing histone H3 'Lys-4' trimethylation (H3K4). Controls selective autophagy activation by ubiquitinated proteins. The protein is Ubiquitin carboxyl-terminal hydrolase 36 (Usp36) of Drosophila pseudoobscura pseudoobscura (Fruit fly).